The sequence spans 52 residues: MIFFFNQIRSIFTALHTPTQQIQLSRRAFFQFLGYLGSCVVISLAAQSKYVQ.

Residues 1–27 lie on the Mitochondrial intermembrane side of the membrane; it reads MIFFFNQIRSIFTALHTPTQQIQLSRR. The helical transmembrane segment at 28–46 threads the bilayer; sequence AFFQFLGYLGSCVVISLAA. Residues 47-52 lie on the Cytoplasmic side of the membrane; that stretch reads QSKYVQ.

Belongs to the EMR1 family.

The protein localises to the mitochondrion outer membrane. Mediates the formation of endoplasmic reticulum (ER)-mitochondria encounter structure (ERMES) foci, thereby contributing to the formation of ER-mitochondrial contact sites. The protein is ERMES regulator 1 of Saccharomyces cerevisiae (strain ATCC 204508 / S288c) (Baker's yeast).